The primary structure comprises 515 residues: Nuclear hormone receptor family member nhr-62 (515 aa).

Positions 95-170 (NLVCVVCGDQ…AGMNPRAVQS (76 aa)) form a DNA-binding region, nuclear receptor. 2 NR C4-type zinc fingers span residues 98 to 118 (CVVC…CNGC) and 134 to 153 (CRFE…CRAC). Residues 169 to 195 (QSERVEREQNGSPNQIEEDDYKDLSSP) form a disordered region. In terms of domain architecture, NR LBD spans 225 to 509 (EMAKLSEQIV…YLCHEVQFIQ (285 aa)). Positions 498–509 (SEYLCHEVQFIQ) are AF-2.

The protein belongs to the nuclear hormone receptor family. Widely expressed at a low level in many tissues including the pharynx, sensory neurons, intestine, spermatheca, hypodermis, and excretory cell.

The protein resides in the nucleus. Functionally, orphan nuclear hormone receptor. Required for metabolic and physiologic responses associated with dietary-restriction-induced longevity. Modulates triglyceride and lipid metabolism and autophagy, associated with dietary-restriction, probably acting via regulation of transcription of target genes. In Caenorhabditis elegans, this protein is Nuclear hormone receptor family member nhr-62 (nhr-62).